Consider the following 698-residue polypeptide: MGRKNRRNRQRRTEQRSPAEEERRKAREQAAWEGGYPEIIKENKLFEHYYQELKIVPDGEWDKFMDALREPLPATIRITGYKSHAKEILHCLKEKYFKELPDIEVDGQKIEAPQPLSWYPEELAWHTNLSRKIIRKSPELEKFHQFLVSETESGNISRQEAVSMIPPVLLNVQPHHKILDMCAAPGSKTAQIIEMLHADMNVPFPEGFVIANDVDNKRCYLLVHQAKRLNSPCIMVVNHDASSIPRLLIENNGSREVLYYDRILCDVPCSGDGTMRKNIDVWKKWTTLNSLQLHGLQIRIATRGVEQLAEGGRMVYSTCSLNPVEDEAVIVSLLDKSEGSLELADVASELPGLKWMPGITQWRVMTKEGQWFEKWEDVPTSRHTQIRPTMFPLKDEEKLKSMNLNRCMRILPHHQNTGGFFVAVLIKKAPMPWNKRQPKLQRRPPVSVCDASVAPEIVKAVADISAIADEPAVDAENGETKPCTNQSGSSKTDSVCCPPPSKKMKLFGFKEDPFVFLSEDDPIFEPIQKFYALDPSFPKKNLLTRTQEGKKRQLYMVSKELRNVLLHNSEKMKVINTGIKVLCRNNDGEQYGCAYRLAQEGIYSLYPFINARILTVSVEDIKVLLTQENPFLSKFSKETQKQANNLDMGSIVLKYEPDPQQPETLQCPIVLCGWRGKTSIRSFVFFLHRINLVQWIFI.

Residues 1–10 show a composition bias toward basic residues; the sequence is MGRKNRRNRQ. A disordered region spans residues 1 to 28; it reads MGRKNRRNRQRRTEQRSPAEEERRKARE. Basic and acidic residues predominate over residues 11 to 28; that stretch reads RRTEQRSPAEEERRKARE. S-adenosyl-L-methionine is bound by residues 182–188, Asp213, Asp240, and Asp266; that span reads CAAPGSK. Cys319 functions as the Nucleophile in the catalytic mechanism. A disordered region spans residues 472–496; sequence AVDAENGETKPCTNQSGSSKTDSVC. The span at 482-493 shows a compositional bias: polar residues; the sequence is PCTNQSGSSKTD.

It belongs to the class I-like SAM-binding methyltransferase superfamily. RsmB/NOP family. TRM4 subfamily.

Its subcellular location is the nucleus. The protein resides in the nucleolus. The protein localises to the cytoplasm. It localises to the mitochondrion. It is found in the cytoskeleton. Its subcellular location is the spindle. The protein resides in the secreted. The protein localises to the extracellular exosome. The catalysed reaction is cytidine(48) in tRNA + S-adenosyl-L-methionine = 5-methylcytidine(48) in tRNA + S-adenosyl-L-homocysteine + H(+). The enzyme catalyses cytidine(49) in tRNA + S-adenosyl-L-methionine = 5-methylcytidine(49) in tRNA + S-adenosyl-L-homocysteine + H(+). It carries out the reaction cytidine(50) in tRNA + S-adenosyl-L-methionine = 5-methylcytidine(50) in tRNA + S-adenosyl-L-homocysteine + H(+). It catalyses the reaction cytidine(34) in tRNA precursor + S-adenosyl-L-methionine = 5-methylcytidine(34) in tRNA precursor + S-adenosyl-L-homocysteine + H(+). The catalysed reaction is a cytidine in mRNA + S-adenosyl-L-methionine = a 5-methylcytidine in mRNA + S-adenosyl-L-homocysteine + H(+). Its function is as follows. RNA cytosine C(5)-methyltransferase that methylates cytosine to 5-methylcytosine (m5C) in various RNAs, such as tRNAs, mRNAs and some long non-coding RNAs (lncRNAs). Involved in various processes, such as epidermal stem cell differentiation, testis differentiation and maternal to zygotic transition during early development: acts by increasing protein synthesis; cytosine C(5)-methylation promoting tRNA stability and preventing mRNA decay. Methylates cytosine to 5-methylcytosine (m5C) at positions 34 and 48 of intron-containing tRNA(Leu)(CAA) precursors, and at positions 48, 49 and 50 of tRNA(Gly)(GCC) precursors. tRNA methylation is required generation of RNA fragments derived from tRNAs (tRFs). Also mediates C(5)-methylation of mitochondrial tRNAs. Catalyzes cytosine C(5)-methylation of mRNAs, leading to stabilize them and prevent mRNA decay. Cytosine C(5)-methylation of mRNAs also regulates mRNA export. Also mediates cytosine C(5)-methylation of non-coding RNAs, such as vault RNAs (vtRNAs), promoting their processing into regulatory small RNAs. Required for proper spindle assembly and chromosome segregation, independently of its methyltransferase activity. This is RNA cytosine-C(5)-methyltransferase NSUN2 from Xenopus laevis (African clawed frog).